Here is a 306-residue protein sequence, read N- to C-terminus: Non-specific ribonucleoside hydrolase RihC (306 aa).

Residue histidine 235 is part of the active site.

Belongs to the IUNH family. RihC subfamily.

Hydrolyzes both purine and pyrimidine ribonucleosides with a broad-substrate specificity. The polypeptide is Non-specific ribonucleoside hydrolase RihC (Salmonella heidelberg (strain SL476)).